The chain runs to 119 residues: Hydrogenase maturation factor HypA (119 aa).

Histidine 2 lines the Ni(2+) pocket. 4 residues coordinate Zn(2+): cysteine 73, cysteine 76, cysteine 90, and cysteine 93.

This sequence belongs to the HypA/HybF family.

Functionally, involved in the maturation of [NiFe] hydrogenases. Required for nickel insertion into the metal center of the hydrogenase. The polypeptide is Hydrogenase maturation factor HypA (Wolinella succinogenes (strain ATCC 29543 / DSM 1740 / CCUG 13145 / JCM 31913 / LMG 7466 / NCTC 11488 / FDC 602W) (Vibrio succinogenes)).